Reading from the N-terminus, the 157-residue chain is Cyclic pyranopterin monophosphate synthase (157 aa).

Substrate is bound by residues Met-74–His-76 and Met-112–Glu-113. Asp-127 is a catalytic residue.

This sequence belongs to the MoaC family. In terms of assembly, homohexamer; trimer of dimers.

It catalyses the reaction (8S)-3',8-cyclo-7,8-dihydroguanosine 5'-triphosphate = cyclic pyranopterin phosphate + diphosphate. Its pathway is cofactor biosynthesis; molybdopterin biosynthesis. Catalyzes the conversion of (8S)-3',8-cyclo-7,8-dihydroguanosine 5'-triphosphate to cyclic pyranopterin monophosphate (cPMP). This chain is Cyclic pyranopterin monophosphate synthase, found in Syntrophomonas wolfei subsp. wolfei (strain DSM 2245B / Goettingen).